Reading from the N-terminus, the 579-residue chain is Capsid vertex component 2 (579 aa).

Residues 1 to 46 (MSRFMHFYKSPVPLVLQAHKKNCLVYTNLRTRRLRLLAQLNQREKE) are interaction with major capsid protein/MCP. The disordered stretch occupies residues 92-134 (RPNEQVSSSTTTGHNNTTGTPTQSVVSGTGAVTGTGGTSSVAP). Residues 101–121 (TTTGHNNTTGTPTQSVVSGTG) are compositionally biased toward low complexity.

The protein belongs to the herpesviridae CVC2 protein family. As to quaternary structure, heterodimerizes with CVC1. Interacts with major capsid protein/MCP and triplex capsid protein 1/TRX1 at the pentamer vertices. Interacts with the large tegument protein/LTP.

It is found in the virion. The protein resides in the host nucleus. Capsid vertex-specific component that plays a role during viral DNA encapsidation, assuring correct genome cleavage and presumably stabilizing capsids that contain full-length viral genomes. Participates in the interaction between the capsid and the tegument through interaction with the large tegument protein/LTP. In Elephantid herpesvirus 1 (isolate Asian elephant/Berlin/Kiba/1998) (EIHV-1), this protein is Capsid vertex component 2.